The chain runs to 439 residues: Adenylosuccinate synthetase (439 aa).

Residues 25-31 and 53-55 each bind GTP; these read GDEGKGK and GHT. The Proton acceptor role is filled by D26. Residues D26 and G53 each coordinate Mg(2+). IMP is bound by residues 26–29, 51–54, T146, R160, N237, T252, and R316; these read DEGK and NAGH. The active-site Proton donor is H54. 312–318 serves as a coordination point for substrate; that stretch reads VTTGRRR. GTP is bound by residues R318, 344–346, and 426–428; these read KLD and GVG.

Belongs to the adenylosuccinate synthetase family. Homodimer. The cofactor is Mg(2+).

The protein resides in the cytoplasm. The enzyme catalyses IMP + L-aspartate + GTP = N(6)-(1,2-dicarboxyethyl)-AMP + GDP + phosphate + 2 H(+). It functions in the pathway purine metabolism; AMP biosynthesis via de novo pathway; AMP from IMP: step 1/2. Plays an important role in the de novo pathway and in the salvage pathway of purine nucleotide biosynthesis. Catalyzes the first committed step in the biosynthesis of AMP from IMP. The sequence is that of Adenylosuccinate synthetase from Mycosarcoma maydis (Corn smut fungus).